A 205-amino-acid chain; its full sequence is Imidazole glycerol phosphate synthase subunit HisH (205 aa).

Residues 3–205 (KIGLIDYGMG…LLRRWLSNIQ (203 aa)) form the Glutamine amidotransferase type-1 domain. C81 functions as the Nucleophile in the catalytic mechanism. Active-site residues include H185 and E187.

In terms of assembly, heterodimer of HisH and HisF.

It is found in the cytoplasm. The enzyme catalyses 5-[(5-phospho-1-deoxy-D-ribulos-1-ylimino)methylamino]-1-(5-phospho-beta-D-ribosyl)imidazole-4-carboxamide + L-glutamine = D-erythro-1-(imidazol-4-yl)glycerol 3-phosphate + 5-amino-1-(5-phospho-beta-D-ribosyl)imidazole-4-carboxamide + L-glutamate + H(+). It catalyses the reaction L-glutamine + H2O = L-glutamate + NH4(+). The protein operates within amino-acid biosynthesis; L-histidine biosynthesis; L-histidine from 5-phospho-alpha-D-ribose 1-diphosphate: step 5/9. In terms of biological role, IGPS catalyzes the conversion of PRFAR and glutamine to IGP, AICAR and glutamate. The HisH subunit catalyzes the hydrolysis of glutamine to glutamate and ammonia as part of the synthesis of IGP and AICAR. The resulting ammonia molecule is channeled to the active site of HisF. The protein is Imidazole glycerol phosphate synthase subunit HisH of Prochlorococcus marinus (strain MIT 9312).